A 524-amino-acid polypeptide reads, in one-letter code: Glutamyl-tRNA(Gln) amidotransferase subunit A (524 aa).

Residues Lys-109 and Ser-184 each act as charge relay system in the active site. The Acyl-ester intermediate role is filled by Ser-208.

This sequence belongs to the amidase family. GatA subfamily. Heterotrimer of A, B and C subunits.

It catalyses the reaction L-glutamyl-tRNA(Gln) + L-glutamine + ATP + H2O = L-glutaminyl-tRNA(Gln) + L-glutamate + ADP + phosphate + H(+). In terms of biological role, allows the formation of correctly charged Gln-tRNA(Gln) through the transamidation of misacylated Glu-tRNA(Gln) in organisms which lack glutaminyl-tRNA synthetase. The reaction takes place in the presence of glutamine and ATP through an activated gamma-phospho-Glu-tRNA(Gln). This is Glutamyl-tRNA(Gln) amidotransferase subunit A from Tropheryma whipplei (strain TW08/27) (Whipple's bacillus).